The chain runs to 215 residues: Putative B3 domain-containing protein Os11g0625400 (215 aa).

The TF-B3 1 DNA-binding region spans 1–51 (MTVELEKIAGSFFISKGWKTFVHRTGLLSGQYIRFQVLTPSKINVLLFDKK). A disordered region spans residues 92 to 117 (SHTSNKETSSDSRTESMTDIPSSSDN). Positions 95–107 (SNKETSSDSRTES) are enriched in basic and acidic residues. Positions 108–117 (MTDIPSSSDN) are enriched in polar residues. Positions 123 to 215 (DIKNYISIIG…PNVKITIDVL (93 aa)) form a DNA-binding region, TF-B3 2.

It localises to the nucleus. The sequence is that of Putative B3 domain-containing protein Os11g0625400 from Oryza sativa subsp. japonica (Rice).